The following is a 124-amino-acid chain: MNAVAQAATPDVNEVPAPLVFTDSAADKVKQLIEEEGNPELKLRVFVQGGGCSGFQYGFTFDEDTNEDDTTMTKNGVTLLIDSMSYQYLVGAEIDYKEDINGAQFVIKNPNASTTCGCGSSFSV.

Residues cysteine 52, cysteine 116, and cysteine 118 each contribute to the iron-sulfur cluster site.

It belongs to the HesB/IscA family. As to quaternary structure, homodimer. Requires iron-sulfur cluster as cofactor.

Functionally, required for insertion of 4Fe-4S clusters. The protein is Putative iron-sulfur cluster insertion protein ErpA of Ralstonia nicotianae (strain ATCC BAA-1114 / GMI1000) (Ralstonia solanacearum).